Reading from the N-terminus, the 277-residue chain is NADPH-dependent 7-cyano-7-deazaguanine reductase (277 aa).

86–88 (IES) is a binding site for substrate. Residue 88-89 (SK) coordinates NADPH. The active-site Thioimide intermediate is Cys184. Asp191 functions as the Proton donor in the catalytic mechanism. 223 to 224 (HE) contributes to the substrate binding site. Residue 252–253 (RG) participates in NADPH binding.

It belongs to the GTP cyclohydrolase I family. QueF type 2 subfamily. Homodimer.

The protein resides in the cytoplasm. The catalysed reaction is 7-aminomethyl-7-carbaguanine + 2 NADP(+) = 7-cyano-7-deazaguanine + 2 NADPH + 3 H(+). Its pathway is tRNA modification; tRNA-queuosine biosynthesis. In terms of biological role, catalyzes the NADPH-dependent reduction of 7-cyano-7-deazaguanine (preQ0) to 7-aminomethyl-7-deazaguanine (preQ1). The chain is NADPH-dependent 7-cyano-7-deazaguanine reductase from Chromohalobacter salexigens (strain ATCC BAA-138 / DSM 3043 / CIP 106854 / NCIMB 13768 / 1H11).